A 156-amino-acid polypeptide reads, in one-letter code: Small ribosomal subunit protein uS7 (156 aa).

It belongs to the universal ribosomal protein uS7 family. In terms of assembly, part of the 30S ribosomal subunit. Contacts proteins S9 and S11.

In terms of biological role, one of the primary rRNA binding proteins, it binds directly to 16S rRNA where it nucleates assembly of the head domain of the 30S subunit. Is located at the subunit interface close to the decoding center, probably blocks exit of the E-site tRNA. The sequence is that of Small ribosomal subunit protein uS7 from Pectobacterium atrosepticum (strain SCRI 1043 / ATCC BAA-672) (Erwinia carotovora subsp. atroseptica).